The chain runs to 220 residues: Iron-sulfur cluster repair protein YtfE (220 aa).

This sequence belongs to the RIC family. YtfE subfamily. As to quaternary structure, homodimer.

It localises to the cytoplasm. Its function is as follows. Di-iron-containing protein involved in the repair of iron-sulfur clusters damaged by oxidative and nitrosative stress conditions. The polypeptide is Iron-sulfur cluster repair protein YtfE (Shigella boydii serotype 18 (strain CDC 3083-94 / BS512)).